The following is a 393-amino-acid chain: Nucleosome assembly protein 1-like 1 (393 aa).

Residues 1–10 (MANIDNKEQT) show a composition bias toward basic and acidic residues. Disordered regions lie at residues 1-36 (MANI…NSKA) and 132-165 (ECEW…KEDP). Acidic residues-rich tracts occupy residues 11-30 (ELDQ…EAGE) and 132-144 (ECEW…EDIS). An NAP1L motif motif is present at residues 126–151 (YEPTEEECEWKVDEEEDISGDLKDKA). A compositionally biased stretch (basic and acidic residues) spans 145-165 (GDLKDKAKLEEEKKDEEKEDP). Positions 274–280 (IKKKQKH) match the Nuclear localization signal motif. Positions 347–378 (AIEDDDDDYDEEGEEADDEEGEEEADEDNDPD) are enriched in acidic residues. The tract at residues 347 to 393 (AIEDDDDDYDEEGEEADDEEGEEEADEDNDPDYEPKKDQNPAECKQQ) is disordered. The span at 379–393 (YEPKKDQNPAECKQQ) shows a compositional bias: basic and acidic residues.

The protein belongs to the nucleosome assembly protein (NAP) family. In terms of assembly, forms homomultimers. Interacts with histone B4. Interacts with the B-type cyclins ccnb1 and ccnb2. Post-translationally, phosphorylated by cyclin B-cdc2 kinase complexes.

Its subcellular location is the cytoplasm. The protein localises to the nucleus. Its function is as follows. Acts as a chaperone for the linker histone to facilitate deposition of histone B4 onto linker DNA. Required for both remodeling of sperm chromatin into nucleosomes, and linker histone binding to nucleosome core dimers. Plays a role in tissue-specific gene regulation. Required for primitive hemopoiesis, acting upstream of tal1/scl. The polypeptide is Nucleosome assembly protein 1-like 1 (Xenopus tropicalis (Western clawed frog)).